The following is a 643-amino-acid chain: Ecto-NOX disulfide-thiol exchanger 1 (643 aa).

The RRM domain maps to 142 to 221; the sequence is KTVFVGGLPE…GRLHVDFAQA (80 aa). Coiled-coil stretches lie at residues 307-342 and 425-570; these read VQSA…LTGI and QAYA…EALL.

The protein belongs to the ENOX family. It depends on Cu cation as a cofactor. In terms of tissue distribution, expressed in lymphocyte cells, breast and breast cancer (at protein level). Found in the sera of cancer patients with a wide variety of cancers including breast, prostate, lung and ovarian cancers, leukemias, and lymphomas. Found also in the serum of healthy volunteers or patients with disorders other than cancer. Probably shed into serum by cancer cells.

It is found in the cell membrane. It localises to the secreted. The protein localises to the extracellular space. With respect to regulation, not inhibited by the antitumor sulfonylurea LY181984, the vabilloid capsaicin, and retinoids. Functionally, probably acts as a terminal oxidase of plasma electron transport from cytosolic NAD(P)H via hydroquinones to acceptors at the cell surface. Hydroquinone oxidase activity alternates with a protein disulfide-thiol interchange/oxidoreductase activity which may control physical membrane displacements associated with vesicle budding or cell enlargement. The activities oscillate with a period length of 24 minutes and play a role in control of the ultradian cellular biological clock. The protein is Ecto-NOX disulfide-thiol exchanger 1 (ENOX1) of Homo sapiens (Human).